The primary structure comprises 697 residues: Mediator of RNA polymerase II transcription subunit 16 (697 aa).

WD repeat units lie at residues 68-107, 199-241, 264-308, and 622-663; these read GHQE…ANSW, RCRV…VSEK, DKFP…LPLN, and NQGS…CLPV.

The protein belongs to the Mediator complex subunit 16 family. In terms of assembly, component of the Mediator complex.

It is found in the nucleus. In terms of biological role, component of the Mediator complex, a coactivator involved in the regulated transcription of nearly all RNA polymerase II-dependent genes. Mediator functions as a bridge to convey information from gene-specific regulatory proteins to the basal RNA polymerase II transcription machinery. Mediator is recruited to promoters by direct interactions with regulatory proteins and serves as a scaffold for the assembly of a functional preinitiation complex with RNA polymerase II and the general transcription factors. The sequence is that of Mediator of RNA polymerase II transcription subunit 16 (med16) from Xenopus laevis (African clawed frog).